The chain runs to 517 residues: Forkhead box protein N4 (517 aa).

Positions 193–289 (KPIYSYSCLI…EEMHKWKRKD (97 aa)) form a DNA-binding region, fork-head. Disordered regions lie at residues 365-398 (VQPQ…LPHP) and 497-517 (SGTS…IALL).

It localises to the nucleus. Transcription factor essential for neural and some non-neural tissues development, such as retina and lung respectively. Binds to an 11-bp consensus sequence containing the invariant tetranucleotide 5'-ACGC-3'. During development of the central nervous system, is required to specify the amacrine and horizontal cell fates from multipotent retinal progenitors while suppressing the alternative photoreceptor cell fates through activating DLL4-NOTCH signaling. Also acts synergistically with ASCL1/MASH1 to activate DLL4-NOTCH signaling and drive commitment of p2 progenitors to the V2b interneuron fates during spinal cord neurogenesis. In development of non-neural tissues, plays an essential role in the specification of the atrioventricular canal and is indirectly required for patterning the distal airway during lung development. This chain is Forkhead box protein N4 (FOXN4), found in Homo sapiens (Human).